Here is a 166-residue protein sequence, read N- to C-terminus: Macrocypin-5a (166 aa).

Residues 20 to 39 (NIPGGMYASSKDGKDEPVTA) are disordered.

The protein belongs to the protease inhibitor I85 family.

Inhibits papain and cysteine cathepsin endopeptidases, and also inhibits cathepsins B and H, which exhibit both exopeptidase and endopeptidase activities. The chain is Macrocypin-5a from Macrolepiota procera (Parasol mushroom).